A 2556-amino-acid polypeptide reads, in one-letter code: Non-reducing polyketide synthase tazA (2556 aa).

Residues 16–270 (LFGPQALSFT…QAIGLRGRFH (255 aa)) form an N-terminal acylcarrier protein transacylase domain (SAT) region. The Nucleophile; for transacylase activity role is filled by Cys-143. His-270 acts as the Proton donor/acceptor; for transacylase activity in catalysis. Residues 397–769 (EDEIAVIGMA…GSNASMIVTQ (373 aa)) form the Ketosynthase family 3 (KS3) domain. The tract at residues 876-1209 (CFGGQISRFV…WAHHCTQAPA (334 aa)) is malonyl-CoA:ACP transacylase (MAT) domain. The segment at 1254-1383 (YTFVGYQDEG…GQIIFQSAAE (130 aa)) is N-terminal hotdog fold. Positions 1254 to 1560 (YTFVGYQDEG…YSRLPKSTMS (307 aa)) constitute a PKS/mFAS DH domain. The interval 1257–1564 (VGYQDEGKRQ…PKSTMSKMLT (308 aa)) is product template (PT) domain. Catalysis depends on His-1285, which acts as the Proton acceptor; for dehydratase activity. The interval 1408–1560 (DPDDVLQGRN…YSRLPKSTMS (153 aa)) is C-terminal hotdog fold. Asp-1465 serves as the catalytic Proton donor; for dehydratase activity. The interval 1567–1621 (TAPSERRAQVDSPSMPASINAPPSASEQAPVEPAPQTKESAPIAEPGAGGQSNSK) is disordered. A compositionally biased stretch (polar residues) spans 1577–1593 (DSPSMPASINAPPSASE). The Carrier domain occupies 1620 to 1694 (SKVPGIVVEV…DVVQCVHKTL (75 aa)). Ser-1654 is modified (O-(pantetheine 4'-phosphoryl)serine). A disordered region spans residues 1700-1731 (SAAQESEGNLTPASSGTQSPRSDPVSDTSLSD). A compositionally biased stretch (polar residues) spans 1702–1731 (AQESEGNLTPASSGTQSPRSDPVSDTSLSD). A methyltransferase domain region spans residues 1830 to 2107 (LEHEGRLIDI…DWTDGHLAEN (278 aa)). Residues 2180 to 2424 (VTGATGSLGA…WTPVDVVAST (245 aa)) form an NADPH-binding (R) domain region.

It depends on pantetheine 4'-phosphate as a cofactor.

Its pathway is secondary metabolite biosynthesis. Non-reducing polyketide synthase; part of the gene cluster that mediates the biosynthesis of azaterrilone A and other azaphilones, a class of fungal metabolites characterized by a highly oxygenated pyrano-quinone bicyclic core and exhibiting a broad range of bioactivities. The first step of the pathway begins with tazA that assembles one acetyl-CoA starter unit, five malonyl-CoA units, and catalyzes a series of Claisen condensations, methylation, PT-mediated cyclization, and finally releases the first hexaketide precursor through the R-domain. The tazA product then undergoes reduction on its terminal ketone and the following pyran-ring formation by yet undetermined enzyme(s). Dehydration and enoyl reduction, possibly involving the trans-enoyl reductase tazE leads to the next intermediate. TazD is predicted as an acetyltransferase and might catalyze the acetylation steps leading to the synthesis of azaterrilone A. Azaterrilone A is not the final product of the taz pathway and both the highly reducing polyketide synthase tazB and the dual enzyme tazHJ catalyze late steps of the pathway, leading to the production of the 2 final stereoisomers that contain additional polyketide modification whose structures have still to be determined. The sequence is that of Non-reducing polyketide synthase tazA from Aspergillus terreus (strain NIH 2624 / FGSC A1156).